The sequence spans 390 residues: Putative F-box protein At3g52320 (390 aa).

Positions 21-71 (VVFLPEIPEEMLIDILIRLPAKSLMRFKCVSKLWLSLITSRYFTNRFFKPS) constitute an F-box domain.

The chain is Putative F-box protein At3g52320 from Arabidopsis thaliana (Mouse-ear cress).